We begin with the raw amino-acid sequence, 159 residues long: Eukaryotic translation initiation factor 5A (159 aa).

Lysine 51 is modified (hypusine).

The protein belongs to the eIF-5A family. Post-translationally, lys-51 undergoes hypusination, a unique post-translational modification that consists in the addition of a butylamino group from spermidine to lysine side chain, leading to the formation of the unusual amino acid hypusine. eIF-5As are the only known proteins to undergo this modification, which is essential for their function.

The protein resides in the cytoplasm. Functionally, translation factor that promotes translation elongation and termination, particularly upon ribosome stalling at specific amino acid sequence contexts. Binds between the exit (E) and peptidyl (P) site of the ribosome and promotes rescue of stalled ribosome: specifically required for efficient translation of polyproline-containing peptides as well as other motifs that stall the ribosome. Acts as a ribosome quality control (RQC) cofactor by joining the RQC complex to facilitate peptidyl transfer during CAT tailing step. Functions as a regulator of autophagy. This Drosophila melanogaster (Fruit fly) protein is Eukaryotic translation initiation factor 5A.